The sequence spans 335 residues: Ketol-acid reductoisomerase (NADP(+)) (335 aa).

The 182-residue stretch at 1 to 182 folds into the KARI N-terminal Rossmann domain; it reads MATIIYDNET…GATRAGVYET (182 aa). Residues 25-28, R48, S51, S53, and 83-86 each bind NADP(+); these read YGSQ and DEKQ. H108 is a catalytic residue. An NADP(+)-binding site is contributed by G134. Positions 183 to 328 constitute a KARI C-terminal knotted domain; it reads TFREETETDL…KEIRANIPWL (146 aa). Mg(2+)-binding residues include D191, E195, E227, and E231. S252 serves as a coordination point for substrate.

The protein belongs to the ketol-acid reductoisomerase family. Mg(2+) is required as a cofactor.

The catalysed reaction is (2R)-2,3-dihydroxy-3-methylbutanoate + NADP(+) = (2S)-2-acetolactate + NADPH + H(+). It carries out the reaction (2R,3R)-2,3-dihydroxy-3-methylpentanoate + NADP(+) = (S)-2-ethyl-2-hydroxy-3-oxobutanoate + NADPH + H(+). It participates in amino-acid biosynthesis; L-isoleucine biosynthesis; L-isoleucine from 2-oxobutanoate: step 2/4. It functions in the pathway amino-acid biosynthesis; L-valine biosynthesis; L-valine from pyruvate: step 2/4. Involved in the biosynthesis of branched-chain amino acids (BCAA). Catalyzes an alkyl-migration followed by a ketol-acid reduction of (S)-2-acetolactate (S2AL) to yield (R)-2,3-dihydroxy-isovalerate. In the isomerase reaction, S2AL is rearranged via a Mg-dependent methyl migration to produce 3-hydroxy-3-methyl-2-ketobutyrate (HMKB). In the reductase reaction, this 2-ketoacid undergoes a metal-dependent reduction by NADPH to yield (R)-2,3-dihydroxy-isovalerate. The chain is Ketol-acid reductoisomerase (NADP(+)) from Methanosarcina acetivorans (strain ATCC 35395 / DSM 2834 / JCM 12185 / C2A).